The sequence spans 356 residues: Tyrosine recombinase XerS (356 aa).

Residues 16–121 (LMPWFVLEYY…ALSSLYKYLT (106 aa)) enclose the Core-binding (CB) domain. The region spanning 169 to 354 (KFLDYVENEY…VNDEQKNALD (186 aa)) is the Tyr recombinase domain. Active-site residues include Arg210, Lys234, His306, Arg309, and His332. Tyr341 (O-(3'-phospho-DNA)-tyrosine intermediate) is an active-site residue.

This sequence belongs to the 'phage' integrase family. XerS subfamily.

It is found in the cytoplasm. With respect to regulation, ftsK is required for recombination. Its function is as follows. Site-specific tyrosine recombinase, which acts by catalyzing the cutting and rejoining of the recombining DNA molecules. Essential to convert dimers of the bacterial chromosome into monomers to permit their segregation at cell division. This chain is Tyrosine recombinase XerS, found in Streptococcus thermophilus (strain CNRZ 1066).